Reading from the N-terminus, the 101-residue chain is Small ribosomal subunit protein uS14 (101 aa).

The protein belongs to the universal ribosomal protein uS14 family. In terms of assembly, part of the 30S ribosomal subunit. Contacts proteins S3 and S10.

In terms of biological role, binds 16S rRNA, required for the assembly of 30S particles and may also be responsible for determining the conformation of the 16S rRNA at the A site. The chain is Small ribosomal subunit protein uS14 from Maricaulis maris (strain MCS10) (Caulobacter maris).